We begin with the raw amino-acid sequence, 207 residues long: High frequency lysogenization protein HflD homolog (207 aa).

It belongs to the HflD family.

The protein resides in the cytoplasm. The protein localises to the cell inner membrane. This is High frequency lysogenization protein HflD homolog from Teredinibacter turnerae (strain ATCC 39867 / T7901).